A 455-amino-acid polypeptide reads, in one-letter code: Serine--tRNA ligase (455 aa).

252 to 254 lines the L-serine pocket; sequence TAE. Residues 283–285 and valine 299 each bind ATP; that span reads RKE. Position 306 (glutamate 306) interacts with L-serine. 370–373 provides a ligand contact to ATP; it reads EVVS. Threonine 406 is an L-serine binding site.

The protein belongs to the class-II aminoacyl-tRNA synthetase family. Type-1 seryl-tRNA synthetase subfamily. As to quaternary structure, homodimer. The tRNA molecule binds across the dimer.

It localises to the cytoplasm. The enzyme catalyses tRNA(Ser) + L-serine + ATP = L-seryl-tRNA(Ser) + AMP + diphosphate + H(+). It carries out the reaction tRNA(Sec) + L-serine + ATP = L-seryl-tRNA(Sec) + AMP + diphosphate + H(+). The protein operates within aminoacyl-tRNA biosynthesis; selenocysteinyl-tRNA(Sec) biosynthesis; L-seryl-tRNA(Sec) from L-serine and tRNA(Sec): step 1/1. Catalyzes the attachment of serine to tRNA(Ser). Is also able to aminoacylate tRNA(Sec) with serine, to form the misacylated tRNA L-seryl-tRNA(Sec), which will be further converted into selenocysteinyl-tRNA(Sec). This chain is Serine--tRNA ligase, found in Thermococcus gammatolerans (strain DSM 15229 / JCM 11827 / EJ3).